The sequence spans 613 residues: Kelch-like protein 36 (613 aa).

The BTB domain occupies 45–112; the sequence is CDVVLVVEEQ…LYSSELELDG (68 aa). Residues 147–249 form the BACK domain; sequence YLYLQELASI…PEDILLQRVK (103 aa). Kelch repeat units follow at residues 294 to 343, 344 to 395, 396 to 442, 444 to 491, 492 to 544, and 545 to 593; these read CLLF…VLGG, FIFV…SIED, MLVA…IYKD, VYIS…SLGD, SIYS…VWQG, and RIYI…VCAL.

In terms of assembly, interacts with CUL3.

The protein operates within protein modification; protein ubiquitination. Functionally, probable substrate-specific adapter of an E3 ubiquitin-protein ligase complex which mediates the ubiquitination and subsequent proteasomal degradation of target proteins. The chain is Kelch-like protein 36 (Klhl36) from Rattus norvegicus (Rat).